A 529-amino-acid polypeptide reads, in one-letter code: Phospholipase A1-Igamma2, chloroplastic (529 aa).

The N-terminal 43 residues, 1–43 (MAAIPSHNNLLTINHKNSITGSSSLNTNFSEINFPAKFRVATR), are a transit peptide targeting the chloroplast. The GXSXG signature appears at 316 to 320 (GHSLG). The Acyl-ester intermediate role is filled by serine 318. Catalysis depends on charge relay system residues aspartate 381 and histidine 437.

Belongs to the AB hydrolase superfamily. Lipase family. In terms of assembly, interacts with SBP1. As to expression, widely expressed. Highly expressed in leaves and stems.

It localises to the plastid. Its subcellular location is the chloroplast. It catalyses the reaction 1,2-dihexadecanoyl-sn-glycero-3-phosphocholine + H2O = 2-hexadecanoyl-sn-glycero-3-phosphocholine + hexadecanoate + H(+). The catalysed reaction is a 1,2-diacyl-3-O-(beta-D-galactosyl)-sn-glycerol + H2O = an acyl-3-O-(beta-D-galactosyl)-sn-glycerol + a fatty acid + H(+). The enzyme catalyses a 1,2-diacyl-3-O-[alpha-D-galactosyl-(1-&gt;6)-beta-D-galactosyl]-sn-glycerol + H2O = acyl-3-O-[alpha-D-galactosyl-(1-&gt;6)-beta-D-galactosyl]-sn-glycerol + a fatty acid + H(+). It carries out the reaction a triacylglycerol + H2O = a diacylglycerol + a fatty acid + H(+). Its function is as follows. Acylhydrolase with broad specificity. Catalyzes the hydrolysis of phosphatidylcholine at the sn-1 position. Possesses moderate activity toward phosphatidylcholine (PC), monogalactosyldiacylglycerol (MGDG), digalactosyldiacylglycerol (DGDG) and triacylglycerol (TAG). The chain is Phospholipase A1-Igamma2, chloroplastic from Arabidopsis thaliana (Mouse-ear cress).